The following is a 558-amino-acid chain: Membrane transporter D2 (558 aa).

The tract at residues 1 to 28 (MTLKKRSSAPELPTSLDEDEEEDSPQPL) is disordered. Over 1 to 38 (MTLKKRSSAPELPTSLDEDEEEDSPQPLSNTPFFSMKN) the chain is Cytoplasmic. A helical membrane pass occupies residues 39 to 59 (LIVATPIILTPLLYGYNLGFV). Residues 60–152 (GPYSTMYGYA…QVGYSSIQSG (93 aa)) lie on the Extracellular side of the membrane. Residues 153-173 (VFAGSLVIGSTMGALMGGYLT) traverse the membrane as a helical segment. Topologically, residues 174–179 (KRLDYC) are cytoplasmic. A helical membrane pass occupies residues 180 to 200 (KSFLFIGLLSVIGNVLTHVAT). Residues 201–204 (GLFH) lie on the Extracellular side of the membrane. The helical transmembrane segment at 205–225 (YWVLFVARIVLGFPLGWQSIT) threads the bilayer. Residues 226–241 (SSHYTDKFAPANHAKT) are Cytoplasmic-facing. A helical membrane pass occupies residues 242 to 262 (LGTLFQVSVSTGIFVTSFFGL). Residues 263 to 281 (VLGNTIQYDAASNANTMGR) are Extracellular-facing. The chain crosses the membrane as a helical span at residues 282 to 302 (MQGLVSVSTLLSIFVVFLPLI). Topologically, residues 303–335 (TKDGYSKSRRGDYEGENSEDASRKAAEEYTMTQ) are cytoplasmic. Residues 336-356 (MIGPILNGVAMGCVTQLTGIN) traverse the membrane as a helical segment. The Extracellular portion of the chain corresponds to 357-373 (ANMNFAPTIMSNLGLQP). The chain crosses the membrane as a helical span at residues 374–394 (LVGNIIVMAWNMLATFCVIPL). Topologically, residues 395–402 (SRRFSMRT) are cytoplasmic. The helical transmembrane segment at 403–423 (LFLFCGFVGSLCCVFLGGIPV) threads the bilayer. Residues 424–441 (YPGVTKSDKAISGIAITG) are Extracellular-facing. A helical membrane pass occupies residues 442-463 (IAIFIALYEMGVGPCFYVLAVD). The Cytoplasmic segment spans residues 464–478 (VFPESFRPIGSSITV). The chain crosses the membrane as a helical span at residues 479-499 (GVMFIFNLIINICYPIATEGI). Over 500 to 512 (SGGPSGNPNKGQA) the chain is Extracellular. A helical membrane pass occupies residues 513–533 (VAFIFFGCIGVVACVIEYFFL). The Cytoplasmic portion of the chain corresponds to 534 to 558 (QPWVEPEAKMTDDLDGAAVPEGKHD).

This sequence belongs to the major facilitator superfamily. Sugar transporter (TC 2.A.1.1) family.

The protein resides in the membrane. This chain is Membrane transporter D2, found in Leishmania donovani.